Consider the following 313-residue polypeptide: Phenylalanine-4-hydroxylase (313 aa).

Residues histidine 154, histidine 159, and glutamate 200 each contribute to the Fe cation site.

The protein belongs to the biopterin-dependent aromatic amino acid hydroxylase family. Fe(2+) is required as a cofactor.

The enzyme catalyses (6R)-L-erythro-5,6,7,8-tetrahydrobiopterin + L-phenylalanine + O2 = (4aS,6R)-4a-hydroxy-L-erythro-5,6,7,8-tetrahydrobiopterin + L-tyrosine. It functions in the pathway amino-acid degradation; L-phenylalanine degradation; acetoacetate and fumarate from L-phenylalanine: step 1/6. The chain is Phenylalanine-4-hydroxylase (phhA) from Ralstonia nicotianae (strain ATCC BAA-1114 / GMI1000) (Ralstonia solanacearum).